The chain runs to 252 residues: Imidazole glycerol phosphate synthase subunit HisF (252 aa).

Residues aspartate 11 and aspartate 130 contribute to the active site.

Belongs to the HisA/HisF family. Heterodimer of HisH and HisF.

The protein localises to the cytoplasm. It catalyses the reaction 5-[(5-phospho-1-deoxy-D-ribulos-1-ylimino)methylamino]-1-(5-phospho-beta-D-ribosyl)imidazole-4-carboxamide + L-glutamine = D-erythro-1-(imidazol-4-yl)glycerol 3-phosphate + 5-amino-1-(5-phospho-beta-D-ribosyl)imidazole-4-carboxamide + L-glutamate + H(+). It functions in the pathway amino-acid biosynthesis; L-histidine biosynthesis; L-histidine from 5-phospho-alpha-D-ribose 1-diphosphate: step 5/9. Its function is as follows. IGPS catalyzes the conversion of PRFAR and glutamine to IGP, AICAR and glutamate. The HisF subunit catalyzes the cyclization activity that produces IGP and AICAR from PRFAR using the ammonia provided by the HisH subunit. The sequence is that of Imidazole glycerol phosphate synthase subunit HisF from Dictyoglomus turgidum (strain DSM 6724 / Z-1310).